We begin with the raw amino-acid sequence, 149 residues long: MTVVDPARFMYERNHFPSLTDKEFETLVLYCQMMNVQMVADYQNRKPDVIIKHLKSCRQKIGVESDFELYFIVINKFVNFERVFPELTSEQINILAAFSFYPKRSTIARRFDIYRCDIYDELIKIRNNLGIEDLESLRMLFFMKITVFL.

It is found in the cell membrane. In terms of biological role, this protein is essential for positively regulating the expression of transfer genes that are involved in the conjugal transfer of DNA between bacterial cells. The sequence is that of Protein TraJ (traJ) from Escherichia coli.